Reading from the N-terminus, the 542-residue chain is NXPE family member 4 (542 aa).

Residues 1–26 form the signal peptide; it reads MKMMASRKSLWVLLFIVIFWISFTVF. 4 N-linked (GlcNAc...) asparagine glycosylation sites follow: Asn-91, Asn-92, Asn-159, and Asn-223.

It belongs to the NXPE family.

It localises to the secreted. This is NXPE family member 4 (Nxpe4) from Rattus norvegicus (Rat).